We begin with the raw amino-acid sequence, 394 residues long: Elongation factor Tu (394 aa).

The region spanning 10–204 is the tr-type G domain; it reads KPHINVGTIG…ALDNYIPEPK (195 aa). The tract at residues 19–26 is G1; the sequence is GHVDHGKT. Residue 19–26 coordinates GTP; the sequence is GHVDHGKT. Residue Thr26 participates in Mg(2+) binding. Positions 60–64 are G2; the sequence is GITIN. The tract at residues 81 to 84 is G3; the sequence is DCPG. Residues 81 to 85 and 136 to 139 each bind GTP; these read DCPGH and NKCD. Residues 136-139 form a G4 region; the sequence is NKCD. Residues 174 to 176 form a G5 region; the sequence is SAL.

This sequence belongs to the TRAFAC class translation factor GTPase superfamily. Classic translation factor GTPase family. EF-Tu/EF-1A subfamily. Monomer.

It localises to the cytoplasm. The catalysed reaction is GTP + H2O = GDP + phosphate + H(+). Its function is as follows. GTP hydrolase that promotes the GTP-dependent binding of aminoacyl-tRNA to the A-site of ribosomes during protein biosynthesis. In Blochmanniella pennsylvanica (strain BPEN), this protein is Elongation factor Tu.